We begin with the raw amino-acid sequence, 257 residues long: Zinc transporter ZupT (257 aa).

8 consecutive transmembrane segments (helical) span residues 5-25, 33-53, 61-81, 109-129, 137-157, 171-191, 195-215, and 236-256; these read LILT…GVLG, LAFS…MEML, GMSP…YFGL, AILL…ATFV, LGFG…LAVA, IFWA…AWLI, LVSP…MVAL, and GVLC…TIGI. The Fe(2+) site is built by Asn-120 and Glu-123. Glu-123 and His-148 together coordinate Zn(2+). Positions 149, 152, and 181 each coordinate Fe(2+). Glu-152 lines the Zn(2+) pocket.

This sequence belongs to the ZIP transporter (TC 2.A.5) family. ZupT subfamily.

It localises to the cell inner membrane. The catalysed reaction is Zn(2+)(in) = Zn(2+)(out). Functionally, mediates zinc uptake. May also transport other divalent cations. The chain is Zinc transporter ZupT from Salmonella paratyphi A (strain ATCC 9150 / SARB42).